Reading from the N-terminus, the 173-residue chain is Crossover junction endodeoxyribonuclease RuvC (173 aa).

Catalysis depends on residues Asp-8, Glu-67, and Asp-139. 3 residues coordinate Mg(2+): Asp-8, Glu-67, and Asp-139.

It belongs to the RuvC family. Homodimer which binds Holliday junction (HJ) DNA. The HJ becomes 2-fold symmetrical on binding to RuvC with unstacked arms; it has a different conformation from HJ DNA in complex with RuvA. In the full resolvosome a probable DNA-RuvA(4)-RuvB(12)-RuvC(2) complex forms which resolves the HJ. Mg(2+) is required as a cofactor.

The protein localises to the cytoplasm. It catalyses the reaction Endonucleolytic cleavage at a junction such as a reciprocal single-stranded crossover between two homologous DNA duplexes (Holliday junction).. Functionally, the RuvA-RuvB-RuvC complex processes Holliday junction (HJ) DNA during genetic recombination and DNA repair. Endonuclease that resolves HJ intermediates. Cleaves cruciform DNA by making single-stranded nicks across the HJ at symmetrical positions within the homologous arms, yielding a 5'-phosphate and a 3'-hydroxyl group; requires a central core of homology in the junction. The consensus cleavage sequence is 5'-(A/T)TT(C/G)-3'. Cleavage occurs on the 3'-side of the TT dinucleotide at the point of strand exchange. HJ branch migration catalyzed by RuvA-RuvB allows RuvC to scan DNA until it finds its consensus sequence, where it cleaves and resolves the cruciform DNA. The sequence is that of Crossover junction endodeoxyribonuclease RuvC from Shewanella sediminis (strain HAW-EB3).